The primary structure comprises 335 residues: uncharacterized protein (335 aa).

The next 4 membrane-spanning stretches (helical) occupy residues Phe-104 to Leu-124, Leu-128 to Phe-148, Leu-280 to Gly-300, and Thr-310 to Val-330.

Its subcellular location is the cell membrane. This is an uncharacterized protein from Methanocaldococcus jannaschii (strain ATCC 43067 / DSM 2661 / JAL-1 / JCM 10045 / NBRC 100440) (Methanococcus jannaschii).